The sequence spans 143 residues: Transcriptional regulator MraZ (143 aa).

2 SpoVT-AbrB domains span residues 5–47 (TYTP…PRAE) and 76–119 (TDEQ…DAAA).

It belongs to the MraZ family. As to quaternary structure, forms oligomers.

The protein localises to the cytoplasm. It localises to the nucleoid. This is Transcriptional regulator MraZ from Mycobacterium sp. (strain JLS).